A 260-amino-acid chain; its full sequence is Neuraminyllactose-binding hemagglutinin (260 aa).

The first 27 residues, 1-27 (MKANNHFKDFAWKKCLLGASVVALLVG), serve as a signal peptide directing secretion. The N-palmitoyl cysteine moiety is linked to residue Cys-28. Cys-28 carries the S-diacylglycerol cysteine lipid modification.

The protein resides in the cell outer membrane. The protein is Neuraminyllactose-binding hemagglutinin (hpaA) of Helicobacter pylori (strain ATCC 700392 / 26695) (Campylobacter pylori).